Reading from the N-terminus, the 422-residue chain is UDP-N-acetylglucosamine 1-carboxyvinyltransferase (422 aa).

22–23 lines the phosphoenolpyruvate pocket; the sequence is KN. UDP-N-acetyl-alpha-D-glucosamine is bound at residue Arg-93. Cys-117 acts as the Proton donor in catalysis. Cys-117 is subject to 2-(S-cysteinyl)pyruvic acid O-phosphothioketal. Residues 122 to 126, Asp-305, and Ile-327 contribute to the UDP-N-acetyl-alpha-D-glucosamine site; that span reads RPVDQ.

This sequence belongs to the EPSP synthase family. MurA subfamily.

Its subcellular location is the cytoplasm. It carries out the reaction phosphoenolpyruvate + UDP-N-acetyl-alpha-D-glucosamine = UDP-N-acetyl-3-O-(1-carboxyvinyl)-alpha-D-glucosamine + phosphate. Its pathway is cell wall biogenesis; peptidoglycan biosynthesis. Its function is as follows. Cell wall formation. Adds enolpyruvyl to UDP-N-acetylglucosamine. The sequence is that of UDP-N-acetylglucosamine 1-carboxyvinyltransferase from Bordetella bronchiseptica (strain ATCC BAA-588 / NCTC 13252 / RB50) (Alcaligenes bronchisepticus).